A 596-amino-acid polypeptide reads, in one-letter code: Arginine--tRNA ligase (596 aa).

Residues 128 to 138 (ANPTSSLHVGH) carry the 'HIGH' region motif.

The protein belongs to the class-I aminoacyl-tRNA synthetase family. Monomer.

Its subcellular location is the cytoplasm. The catalysed reaction is tRNA(Arg) + L-arginine + ATP = L-arginyl-tRNA(Arg) + AMP + diphosphate. The polypeptide is Arginine--tRNA ligase (Acinetobacter baumannii (strain SDF)).